The primary structure comprises 135 residues: MAKTFTFELVSPERLLLSEEVEQVVIPGTEGEMTVMAEHAPVMTGIKPGVITVVRAGSEREQFVVFGGFADITPDGCRLLAESATRVKELDRADLARRIEEVRAEVQGARDHETRTKAEEFLGQLTTLEGALLPA.

Belongs to the ATPase epsilon chain family. As to quaternary structure, F-type ATPases have 2 components, CF(1) - the catalytic core - and CF(0) - the membrane proton channel. CF(1) has five subunits: alpha(3), beta(3), gamma(1), delta(1), epsilon(1). CF(0) has three main subunits: a, b and c.

Its subcellular location is the cell inner membrane. In terms of biological role, produces ATP from ADP in the presence of a proton gradient across the membrane. This is ATP synthase epsilon chain from Chelativorans sp. (strain BNC1).